A 103-amino-acid polypeptide reads, in one-letter code: Histone H4.1 (103 aa).

Residues 1–14 (MSGRGKGGKGLGKG) are compositionally biased toward gly residues. The disordered stretch occupies residues 1–20 (MSGRGKGGKGLGKGGAKRHR). The residue at position 6 (Lys-6) is an N6-acetyl-N6-methyllysine; alternate. Residues Lys-6, Lys-9, and Lys-13 each carry the N6-methyllysine; alternate modification. At Lys-13 the chain carries N6-acetyl-N6-methyllysine; alternate. Residues 17–21 (KRHRK) mediate DNA binding. An N6-glutaryllysine modification is found at Lys-92.

It belongs to the histone H4 family. As to quaternary structure, the nucleosome is a histone octamer containing two molecules each of H2A, H2B, H3 and H4 assembled in one H3-H4 heterotetramer and two H2A-H2B heterodimers. The octamer wraps approximately 147 bp of DNA. Post-translationally, glutarylation at Lys-92 (H4K91glu) destabilizes nucleosomes by promoting dissociation of the H2A-H2B dimers from nucleosomes.

It localises to the nucleus. Its subcellular location is the chromosome. Its function is as follows. Core component of nucleosome. Nucleosomes wrap and compact DNA into chromatin, limiting DNA accessibility to the cellular machineries which require DNA as a template. Histones thereby play a central role in transcription regulation, DNA repair, DNA replication and chromosomal stability. DNA accessibility is regulated via a complex set of post-translational modifications of histones, also called histone code, and nucleosome remodeling. This Eremothecium gossypii (strain ATCC 10895 / CBS 109.51 / FGSC 9923 / NRRL Y-1056) (Yeast) protein is Histone H4.1 (HHF1).